The sequence spans 283 residues: Phosphatidylserine decarboxylase proenzyme (283 aa).

Active-site charge relay system; for autoendoproteolytic cleavage activity residues include aspartate 89, histidine 146, and serine 249. Residue serine 249 is the Schiff-base intermediate with substrate; via pyruvic acid; for decarboxylase activity of the active site. Serine 249 is subject to Pyruvic acid (Ser); by autocatalysis.

It belongs to the phosphatidylserine decarboxylase family. PSD-B subfamily. Prokaryotic type I sub-subfamily. In terms of assembly, heterodimer of a large membrane-associated beta subunit and a small pyruvoyl-containing alpha subunit. Pyruvate serves as cofactor. Post-translationally, is synthesized initially as an inactive proenzyme. Formation of the active enzyme involves a self-maturation process in which the active site pyruvoyl group is generated from an internal serine residue via an autocatalytic post-translational modification. Two non-identical subunits are generated from the proenzyme in this reaction, and the pyruvate is formed at the N-terminus of the alpha chain, which is derived from the carboxyl end of the proenzyme. The autoendoproteolytic cleavage occurs by a canonical serine protease mechanism, in which the side chain hydroxyl group of the serine supplies its oxygen atom to form the C-terminus of the beta chain, while the remainder of the serine residue undergoes an oxidative deamination to produce ammonia and the pyruvoyl prosthetic group on the alpha chain. During this reaction, the Ser that is part of the protease active site of the proenzyme becomes the pyruvoyl prosthetic group, which constitutes an essential element of the active site of the mature decarboxylase.

It localises to the cell membrane. It carries out the reaction a 1,2-diacyl-sn-glycero-3-phospho-L-serine + H(+) = a 1,2-diacyl-sn-glycero-3-phosphoethanolamine + CO2. It functions in the pathway phospholipid metabolism; phosphatidylethanolamine biosynthesis; phosphatidylethanolamine from CDP-diacylglycerol: step 2/2. Functionally, catalyzes the formation of phosphatidylethanolamine (PtdEtn) from phosphatidylserine (PtdSer). The sequence is that of Phosphatidylserine decarboxylase proenzyme from Legionella pneumophila (strain Corby).